We begin with the raw amino-acid sequence, 492 residues long: Cysteine--tRNA ligase (492 aa).

Cys-29 serves as a coordination point for Zn(2+). The 'HIGH' region motif lies at Leu-31–His-41. Residues Cys-229, His-254, and Glu-258 each coordinate Zn(2+). The 'KMSKS' region motif lies at Lys-286–Ser-290.

It belongs to the class-I aminoacyl-tRNA synthetase family. Zn(2+) serves as cofactor.

It localises to the cytoplasm. It catalyses the reaction tRNA(Cys) + L-cysteine + ATP = L-cysteinyl-tRNA(Cys) + AMP + diphosphate. This chain is Cysteine--tRNA ligase, found in Haloarcula marismortui (strain ATCC 43049 / DSM 3752 / JCM 8966 / VKM B-1809) (Halobacterium marismortui).